Here is a 487-residue protein sequence, read N- to C-terminus: Malonate-semialdehyde dehydrogenase 2 (487 aa).

Positions 154, 178, 181, 182, and 231 each coordinate NAD(+). C286 serves as the catalytic Nucleophile. Residue E386 coordinates NAD(+).

Belongs to the aldehyde dehydrogenase family. IolA subfamily. In terms of assembly, homotetramer.

It carries out the reaction 3-oxopropanoate + NAD(+) + CoA + H2O = hydrogencarbonate + acetyl-CoA + NADH + H(+). The catalysed reaction is 2-methyl-3-oxopropanoate + NAD(+) + CoA + H2O = propanoyl-CoA + hydrogencarbonate + NADH + H(+). The protein operates within polyol metabolism; myo-inositol degradation into acetyl-CoA; acetyl-CoA from myo-inositol: step 7/7. Catalyzes the oxidation of malonate semialdehyde (MSA) and methylmalonate semialdehyde (MMSA) into acetyl-CoA and propanoyl-CoA, respectively. Is involved in a myo-inositol catabolic pathway. Bicarbonate, and not CO2, is the end-product of the enzymatic reaction. The chain is Malonate-semialdehyde dehydrogenase 2 from Bacillus thuringiensis subsp. konkukian (strain 97-27).